Consider the following 494-residue polypeptide: Lysine--tRNA ligase (494 aa).

E407 and E414 together coordinate Mg(2+).

The protein belongs to the class-II aminoacyl-tRNA synthetase family. In terms of assembly, homodimer. Mg(2+) is required as a cofactor.

The protein localises to the cytoplasm. It catalyses the reaction tRNA(Lys) + L-lysine + ATP = L-lysyl-tRNA(Lys) + AMP + diphosphate. This Lactococcus lactis subsp. cremoris (strain SK11) protein is Lysine--tRNA ligase.